Here is a 197-residue protein sequence, read N- to C-terminus: MATPTKVSAVAEITNDFKESNAAVLTEYRGLTVAQLKQLRVSLGQDTKFAVVKNTLTAIAAKEAGVEAFDGQLAGPTAIAFIKGDAVAAAKSLTDFAKANKQLVIKTGYFEGKALDASEVAALAALESRELQLAKVAGVLKAPAAAAARIIDALRLKLEEENGAPAAAEAPAAEESADSAAEAAAEAPAEAPAAEEN.

The disordered stretch occupies residues 163–197 (GAPAAAEAPAAEESADSAAEAAAEAPAEAPAAEEN).

Belongs to the universal ribosomal protein uL10 family. Part of the ribosomal stalk of the 50S ribosomal subunit. The N-terminus interacts with L11 and the large rRNA to form the base of the stalk. The C-terminus forms an elongated spine to which L12 dimers bind in a sequential fashion forming a multimeric L10(L12)X complex.

Functionally, forms part of the ribosomal stalk, playing a central role in the interaction of the ribosome with GTP-bound translation factors. The chain is Large ribosomal subunit protein uL10 from Pseudarthrobacter chlorophenolicus (strain ATCC 700700 / DSM 12829 / CIP 107037 / JCM 12360 / KCTC 9906 / NCIMB 13794 / A6) (Arthrobacter chlorophenolicus).